The chain runs to 435 residues: Asparagine--tRNA ligase (435 aa).

This sequence belongs to the class-II aminoacyl-tRNA synthetase family. In terms of assembly, homodimer.

The protein localises to the cytoplasm. The enzyme catalyses tRNA(Asn) + L-asparagine + ATP = L-asparaginyl-tRNA(Asn) + AMP + diphosphate + H(+). This chain is Asparagine--tRNA ligase, found in Leptospira borgpetersenii serovar Hardjo-bovis (strain JB197).